Reading from the N-terminus, the 196-residue chain is MLLSDRDLRAAIESGRVKLDPYDPELVQPSSIDVRLDRYFRVFENHKYPHIDPAVEQPGLTRLVEPEGDEPFILHPGEFVLASTYEMVTLPNDIASRLEGKSSLGRLGLLTHSTAGFIDPGFSGHVTLELSNVSTLPIKLYPGMRIGQLCMFQLSSPAENPYGSEVCGSRYQGQRGPTPSRSYLNFTRTKIREGDQ.

Residues 101-106, D119, 127-129, Q148, Y162, and Q174 each bind dCTP; these read KSSLGR and TLE. E129 functions as the Proton donor/acceptor in the catalytic mechanism.

Belongs to the dCTP deaminase family. As to quaternary structure, homotrimer.

The enzyme catalyses dCTP + 2 H2O = dUMP + NH4(+) + diphosphate. The protein operates within pyrimidine metabolism; dUMP biosynthesis; dUMP from dCTP: step 1/1. Bifunctional enzyme that catalyzes both the deamination of dCTP to dUTP and the hydrolysis of dUTP to dUMP without releasing the toxic dUTP intermediate. The sequence is that of dCTP deaminase, dUMP-forming from Thermobifida fusca (strain YX).